The chain runs to 129 residues: Large ribosomal subunit protein uL14m (129 aa).

Belongs to the universal ribosomal protein uL14 family.

It localises to the mitochondrion. The sequence is that of Large ribosomal subunit protein uL14m (RPL14) from Acanthamoeba castellanii (Amoeba).